The following is a 283-amino-acid chain: ATP phosphoribosyltransferase (283 aa).

The protein belongs to the ATP phosphoribosyltransferase family. Long subfamily. In terms of assembly, equilibrium between an active dimeric form, an inactive hexameric form and higher aggregates. Interconversion between the various forms is largely reversible and is influenced by the natural substrates and inhibitors of the enzyme. Mg(2+) serves as cofactor.

Its subcellular location is the cytoplasm. It catalyses the reaction 1-(5-phospho-beta-D-ribosyl)-ATP + diphosphate = 5-phospho-alpha-D-ribose 1-diphosphate + ATP. It functions in the pathway amino-acid biosynthesis; L-histidine biosynthesis; L-histidine from 5-phospho-alpha-D-ribose 1-diphosphate: step 1/9. Feedback inhibited by histidine. Catalyzes the condensation of ATP and 5-phosphoribose 1-diphosphate to form N'-(5'-phosphoribosyl)-ATP (PR-ATP). Has a crucial role in the pathway because the rate of histidine biosynthesis seems to be controlled primarily by regulation of HisG enzymatic activity. In Mycobacterium sp. (strain KMS), this protein is ATP phosphoribosyltransferase.